A 285-amino-acid chain; its full sequence is Membrane cofactor protein (285 aa).

The N-terminal stretch at 1–34 (MAPPSRRECPFPSRRFPGLFLAALALLLSSRSDA) is a signal peptide. Sushi domains follow at residues 35–96 (CGPP…PCVK), 97–159 (KVCH…ICQK), 160–225 (ILCK…ECKV), and 226–285 (VKCR…KCVK). Disulfide bonds link C99–C141, C127–C157, C162–C210, C191–C223, C228–C270, and C256–C283. A glycan (N-linked (GlcNAc...) asparagine) is linked at N114. O-linked (GalNAc...) threonine glycosylation is found at T167 and T207.

As to quaternary structure, interacts with C3b. Interacts with C4b. Interacts with moesin/MSN. N-glycosylated. Probably less N-glycosylated in testis. Present in blood and sperm. Isoform 2, but not isoform 1, is present at the erythrocyte membrane (at protein level).

It is found in the cytoplasmic vesicle. The protein resides in the secretory vesicle. The protein localises to the acrosome inner membrane. In terms of biological role, acts as a cofactor for complement factor I, a serine protease which protects autologous cells against complement-mediated injury by cleaving C3b and C4b deposited on host tissue. May be involved in the fusion of the spermatozoa with the oocyte during fertilization. Also acts as a costimulatory factor for T-cells which induces the differentiation of CD4+ into T-regulatory 1 cells. T-regulatory 1 cells suppress immune responses by secreting interleukin-10, and therefore are thought to prevent autoimmunity. The protein is Membrane cofactor protein (CD46) of Saimiri sciureus (Common squirrel monkey).